The following is a 955-amino-acid chain: 2-oxoglutarate dehydrogenase E1 component (955 aa).

This sequence belongs to the alpha-ketoglutarate dehydrogenase family. In terms of assembly, homodimer. Part of the 2-oxoglutarate dehydrogenase (OGDH) complex composed of E1 (2-oxoglutarate dehydrogenase), E2 (dihydrolipoamide succinyltransferase) and E3 (dihydrolipoamide dehydrogenase); the complex contains multiple copies of the three enzymatic components (E1, E2 and E3). It depends on thiamine diphosphate as a cofactor.

The catalysed reaction is N(6)-[(R)-lipoyl]-L-lysyl-[protein] + 2-oxoglutarate + H(+) = N(6)-[(R)-S(8)-succinyldihydrolipoyl]-L-lysyl-[protein] + CO2. E1 component of the 2-oxoglutarate dehydrogenase (OGDH) complex which catalyzes the decarboxylation of 2-oxoglutarate, the first step in the conversion of 2-oxoglutarate to succinyl-CoA and CO(2). The sequence is that of 2-oxoglutarate dehydrogenase E1 component from Bacillus cereus (strain AH820).